A 523-amino-acid chain; its full sequence is Ubiquitin carboxyl-terminal hydrolase 22-B (523 aa).

The UBP-type zinc finger occupies 4 to 121 (AGCSHVNSFK…KEEQRKAWKL (118 aa)). Residues C6, H8, C46, C49, C59, C62, C67, H72, H76, H82, C95, and C98 each coordinate Zn(2+). A USP domain is found at 174 to 518 (RGLINLGNTC…EGYLLFYHKQ (345 aa)). C183 serves as the catalytic Nucleophile. H477 functions as the Proton acceptor in the catalytic mechanism.

It belongs to the peptidase C19 family. UBP8 subfamily. Component of some SAGA transcription coactivator-HAT complexes.

The protein resides in the nucleus. It carries out the reaction Thiol-dependent hydrolysis of ester, thioester, amide, peptide and isopeptide bonds formed by the C-terminal Gly of ubiquitin (a 76-residue protein attached to proteins as an intracellular targeting signal).. In terms of biological role, histone deubiquitinating component of the transcription regulatory histone acetylation (HAT) complex SAGA. Catalyzes the deubiquitination of both histones H2A and H2B, thereby acting as a coactivator. Recruited to specific gene promoters by activators, where it is required for transcription. In Xenopus laevis (African clawed frog), this protein is Ubiquitin carboxyl-terminal hydrolase 22-B (usp22-b).